Consider the following 323-residue polypeptide: Phospho-N-acetylmuramoyl-pentapeptide-transferase (323 aa).

9 consecutive transmembrane segments (helical) span residues 3 to 23, 52 to 72, 77 to 97, 121 to 141, 145 to 165, 175 to 195, 200 to 220, 226 to 248, and 301 to 321; these read NILLPLLGGFIITAAFMPALI, MGGLLFIVAIAVMTLLTSWVL, MLPTTWILIFILVLYGALGMW, IVGALILFWVYTHEQLPMALH, IGNWHMSGWYAVFVILWLVGF, LDGLVSGLASIAFAAYGIVAW, INIAIFCFAVVGSLLGFLIFN, IFMGDTGSLALGGALAAVSILLH, and IDLTFWGIGLVTALSGVWVIL.

This sequence belongs to the glycosyltransferase 4 family. MraY subfamily. Requires Mg(2+) as cofactor.

Its subcellular location is the cell membrane. The catalysed reaction is UDP-N-acetyl-alpha-D-muramoyl-L-alanyl-gamma-D-glutamyl-L-lysyl-D-alanyl-D-alanine + di-trans,octa-cis-undecaprenyl phosphate = Mur2Ac(oyl-L-Ala-gamma-D-Glu-L-Lys-D-Ala-D-Ala)-di-trans,octa-cis-undecaprenyl diphosphate + UMP. The protein operates within cell wall biogenesis; peptidoglycan biosynthesis. Its function is as follows. Catalyzes the initial step of the lipid cycle reactions in the biosynthesis of the cell wall peptidoglycan: transfers peptidoglycan precursor phospho-MurNAc-pentapeptide from UDP-MurNAc-pentapeptide onto the lipid carrier undecaprenyl phosphate, yielding undecaprenyl-pyrophosphoryl-MurNAc-pentapeptide, known as lipid I. The chain is Phospho-N-acetylmuramoyl-pentapeptide-transferase from Levilactobacillus brevis (strain ATCC 367 / BCRC 12310 / CIP 105137 / JCM 1170 / LMG 11437 / NCIMB 947 / NCTC 947) (Lactobacillus brevis).